Here is a 172-residue protein sequence, read N- to C-terminus: Adenine phosphoribosyltransferase (172 aa).

The protein belongs to the purine/pyrimidine phosphoribosyltransferase family. Homodimer.

It is found in the cytoplasm. The catalysed reaction is AMP + diphosphate = 5-phospho-alpha-D-ribose 1-diphosphate + adenine. The protein operates within purine metabolism; AMP biosynthesis via salvage pathway; AMP from adenine: step 1/1. Catalyzes a salvage reaction resulting in the formation of AMP, that is energically less costly than de novo synthesis. The protein is Adenine phosphoribosyltransferase of Herpetosiphon aurantiacus (strain ATCC 23779 / DSM 785 / 114-95).